A 70-amino-acid chain; its full sequence is MSAFENFGKRETVSDDRMECGICWHVYDPAEGDPVWQIPPGTPFSNLTEDWRCPNCDALQSKFMRLGDGR.

Residues 15–66 (DDRMECGICWHVYDPAEGDPVWQIPPGTPFSNLTEDWRCPNCDALQSKFMRL) form the Rubredoxin-like domain. Cys-20, Cys-23, Cys-53, and Cys-56 together coordinate Fe cation.

It belongs to the rubredoxin family. It depends on Fe(3+) as a cofactor.

Functionally, could be an electron transport intermediate in hydrogen oxidation. This is Probable rubredoxin HupI (hupI) from Rhizobium leguminosarum bv. viciae.